Consider the following 252-residue polypeptide: Flagellar brake protein YcgR (252 aa).

The 119-residue stretch at 118 to 236 folds into the PilZ domain; the sequence is QRREYFRVSI…EKGLQRAIFE (119 aa).

The protein belongs to the YcgR family. As to quaternary structure, monomer. Interacts with the flagellar basal bodies.

It is found in the bacterial flagellum basal body. Functionally, acts as a flagellar brake, regulating swimming and swarming in a bis-(3'-5') cyclic diguanylic acid (c-di-GMP)-dependent manner. Binds 1 c-di-GMP dimer per subunit. Increasing levels of c-di-GMP lead to decreased motility. The chain is Flagellar brake protein YcgR from Yersinia pseudotuberculosis serotype I (strain IP32953).